Reading from the N-terminus, the 260-residue chain is MIIVLSPAKSLDYDTPAHVQSYTKPAFVDDASELIDGLRKLSPQDIATLMDISDPLARLNFQRYADWSTTFTPANAKQAVLAFNGDVYEGFDAKSLSSADLDYAQQHVRVLSGLYGLLRPLDLLQPYRLEMGTRFPTARGKDLYAFWGDRITRALNEQLETRSGAARVLVNCASTEYFKSVKPKLLAAPVITPVFEDWKGGRYKIISFHAKRARGLMARFIVENRITDPKALKDFATEGYAFDAAASNDSTYVYRRRVGE.

Belongs to the UPF0246 family.

The protein is UPF0246 protein Bcep18194_A5551 of Burkholderia lata (strain ATCC 17760 / DSM 23089 / LMG 22485 / NCIMB 9086 / R18194 / 383).